The primary structure comprises 405 residues: Indoleamine 2,3-dioxygenase 2 (405 aa).

His-347 lines the heme pocket.

It belongs to the indoleamine 2,3-dioxygenase family. Requires heme as cofactor. As to expression, expressed mainly in antigen-presenting immune cells, liver, kidney, brain, and placenta. Highly expressed in kidney, followed by epididymis and liver (at protein level). Detected in the tails of the spermatozoa in the testis and in the kidney tubules (at protein level). Constitutively expressed in brain.

The enzyme catalyses L-tryptophan + O2 = N-formyl-L-kynurenine. It participates in amino-acid degradation; L-tryptophan degradation via kynurenine pathway; L-kynurenine from L-tryptophan: step 1/2. With respect to regulation, activity is inhibited by D-1MT (1-methyl-D-tryptophan) and MTH-trp (methylthiohydantoin-DL-tryptophan) but not L-1MT (1-methyl-L-tryptophan). Its function is as follows. Catalyzes the first and rate-limiting step in the kynurenine pathway of tryptophan catabolism. Involved in immune regulation. The chain is Indoleamine 2,3-dioxygenase 2 from Mus musculus (Mouse).